We begin with the raw amino-acid sequence, 463 residues long: MKHAVKHIHFIGIGGVGMSGIAEVLLNLGYAVSGSDLADNAVTQRLAKLGARIHRGHAPSNIAGADAVVTSTAVQESNPEVVAAREKKIPIVPRALMLAELMRLRQGIAIAGTHGKTTTTSLVASILGEAGMDPTYVIGGKLTAAGTNARLGQGDFLVAEADESDASFLYLTPVIAIVTNIDADHMDTYGHDFDRLKTAFVDFCQRLPFYGMAVLCIDDANVREILPRITKPITTYGFDPAAQVRAVDTRFEHGQMRFTVKREGMADLDVTLNQPGLHNVLNALAAIAVATEVGASDAAIVKALAEFHGVGRRFQRYGEHPTKDGGCYWLIDDYGHHPVEMAATLAAARGAFPGRRLVLVFQPHRYSRTRDCFEDFVKVLSETDALVLTEVYPAGEAPIVAADGRALARAVRVAGKVEPVFVENVADVAATVRDLVQADDVVLVMGAGSIGQVAPALGERDAP.

112–118 (GTHGKTT) contacts ATP.

Belongs to the MurCDEF family.

Its subcellular location is the cytoplasm. It catalyses the reaction UDP-N-acetyl-alpha-D-muramate + L-alanine + ATP = UDP-N-acetyl-alpha-D-muramoyl-L-alanine + ADP + phosphate + H(+). The protein operates within cell wall biogenesis; peptidoglycan biosynthesis. In terms of biological role, cell wall formation. The polypeptide is UDP-N-acetylmuramate--L-alanine ligase (Thiobacillus denitrificans (strain ATCC 25259 / T1)).